The following is a 272-amino-acid chain: Shikimate dehydrogenase (NADP(+)) (272 aa).

Shikimate contacts are provided by residues 14-16 (SKS) and Thr61. Catalysis depends on Lys65, which acts as the Proton acceptor. Glu77 contacts NADP(+). Residues Asn86 and Asp102 each coordinate shikimate. NADP(+) is bound by residues 126 to 130 (GAGGA), 149 to 154 (NRTASR), and Met213. Shikimate is bound at residue Tyr215. Residue Gly237 participates in NADP(+) binding.

It belongs to the shikimate dehydrogenase family. Homodimer.

It catalyses the reaction shikimate + NADP(+) = 3-dehydroshikimate + NADPH + H(+). The protein operates within metabolic intermediate biosynthesis; chorismate biosynthesis; chorismate from D-erythrose 4-phosphate and phosphoenolpyruvate: step 4/7. In terms of biological role, involved in the biosynthesis of the chorismate, which leads to the biosynthesis of aromatic amino acids. Catalyzes the reversible NADPH linked reduction of 3-dehydroshikimate (DHSA) to yield shikimate (SA). The chain is Shikimate dehydrogenase (NADP(+)) from Citrobacter koseri (strain ATCC BAA-895 / CDC 4225-83 / SGSC4696).